The following is a 164-amino-acid chain: Phosphopantetheine adenylyltransferase (164 aa).

S9 lines the substrate pocket. ATP is bound by residues 9 to 10 (SF) and H17. Substrate contacts are provided by K41, T74, and R88. Residues 89-91 (GVR), E99, and 124-130 (NSFVASS) contribute to the ATP site.

It belongs to the bacterial CoaD family. In terms of assembly, homohexamer. Requires Mg(2+) as cofactor.

The protein resides in the cytoplasm. It catalyses the reaction (R)-4'-phosphopantetheine + ATP + H(+) = 3'-dephospho-CoA + diphosphate. It participates in cofactor biosynthesis; coenzyme A biosynthesis; CoA from (R)-pantothenate: step 4/5. Its function is as follows. Reversibly transfers an adenylyl group from ATP to 4'-phosphopantetheine, yielding dephospho-CoA (dPCoA) and pyrophosphate. This Lactobacillus helveticus (strain DPC 4571) protein is Phosphopantetheine adenylyltransferase.